The sequence spans 326 residues: Vomeronasal type-1 receptor 94 (326 aa).

Residues 1-32 are Extracellular-facing; the sequence is MSEILLFSPQPLFSYTMNKYSRLYTNSNIRNT. Residues 33–53 traverse the membrane as a helical segment; sequence FFSEIGIGIAANSLLLLFHIF. The Cytoplasmic portion of the chain corresponds to 54–65; it reads KFIRGQRSRLTD. The chain crosses the membrane as a helical span at residues 66–86; sequence LPIGLLSLIHLLKLLMIAFIA. The Extracellular segment spans residues 87-110; the sequence is TDIFISWRGWDDIICKFLVYLYRS. A disulfide bond links Cys101 and Cys188. Residues 111–130 form a helical membrane-spanning segment; sequence FRGLSLCTTCMLSVLQAITL. Topologically, residues 131 to 150 are cytoplasmic; the sequence is SPRSSCLAKFKHKSPHHVSC. The chain crosses the membrane as a helical span at residues 151–171; sequence AILSLSVLYMFISSHLLVSLI. Topologically, residues 172–203 are extracellular; the sequence is ATPNLTTNVFMYVSESCSILPMSYLMQSMFST. An N-linked (GlcNAc...) asparagine glycan is attached at Asn175. A helical membrane pass occupies residues 204 to 224; sequence LLAIRDVFLISLMVLSTCYMV. Topologically, residues 225–254 are cytoplasmic; that stretch reads ALLCRHRKQTRHLQGTSLSPKASPEKKATH. The helical transmembrane segment at 255–275 threads the bilayer; sequence SILMLMSFFVLMSILDSIVSC. Residues 276 to 285 lie on the Extracellular side of the membrane; that stretch reads SRTMFLYDPT. A helical membrane pass occupies residues 286 to 306; that stretch reads SYAIQIFVSHIYATVSPFVFM. Over 307–326 the chain is Cytoplasmic; it reads SNEKHIVNFLRSLCKRVINV.

This sequence belongs to the G-protein coupled receptor 1 family.

Its subcellular location is the cell membrane. Putative pheromone receptor implicated in the regulation of social as well as reproductive behavior. This is Vomeronasal type-1 receptor 94 (Vom1r94) from Rattus norvegicus (Rat).